Here is a 485-residue protein sequence, read N- to C-terminus: Cytoplasmic tRNA 2-thiolation protein 2 (485 aa).

It belongs to the CTU2/NCS2 family.

It localises to the cytoplasm. The protein operates within tRNA modification; 5-methoxycarbonylmethyl-2-thiouridine-tRNA biosynthesis. Functionally, plays a central role in 2-thiolation of mcm(5)S(2)U at tRNA wobble positions of tRNA(Lys), tRNA(Glu) and tRNA(Gln). May act by forming a heterodimer with NCS6 that ligates sulfur from thiocarboxylated URM1 onto the uridine of tRNAs at wobble position. Prior mcm(5) tRNA modification by the elongator complex is required for 2-thiolation. May also be involved in protein urmylation. The protein is Cytoplasmic tRNA 2-thiolation protein 2 of Vanderwaltozyma polyspora (strain ATCC 22028 / DSM 70294 / BCRC 21397 / CBS 2163 / NBRC 10782 / NRRL Y-8283 / UCD 57-17) (Kluyveromyces polysporus).